The following is a 161-amino-acid chain: Cyclic pyranopterin monophosphate synthase (161 aa).

Residues 75–77 and 113–114 contribute to the substrate site; these read LCH and ME. The active site involves Asp-128.

The protein belongs to the MoaC family. Homohexamer; trimer of dimers.

The enzyme catalyses (8S)-3',8-cyclo-7,8-dihydroguanosine 5'-triphosphate = cyclic pyranopterin phosphate + diphosphate. The protein operates within cofactor biosynthesis; molybdopterin biosynthesis. In terms of biological role, catalyzes the conversion of (8S)-3',8-cyclo-7,8-dihydroguanosine 5'-triphosphate to cyclic pyranopterin monophosphate (cPMP). This chain is Cyclic pyranopterin monophosphate synthase, found in Salmonella dublin (strain CT_02021853).